Reading from the N-terminus, the 140-residue chain is Large ribosomal subunit protein bL19 (140 aa).

The segment covering Arg-113–Ile-126 has biased composition (basic and acidic residues). Positions Arg-113–Glu-140 are disordered.

The protein belongs to the bacterial ribosomal protein bL19 family.

Functionally, this protein is located at the 30S-50S ribosomal subunit interface and may play a role in the structure and function of the aminoacyl-tRNA binding site. This Xanthobacter autotrophicus (strain ATCC BAA-1158 / Py2) protein is Large ribosomal subunit protein bL19.